The following is a 135-amino-acid chain: MARPPKERRVEYIPEIRYFKPAGIPARDIKEVNLSIEEVEAIRLKDLEGLTQEECARKMEVSRPTFQRVLTGAREKIARALIEGKALRFEGGDYKLAKLHVKCHRCGNKFEVPFHHRHRFSRRFCPECDDEKNEE.

It belongs to the UPF0251 family.

This chain is UPF0251 protein Hore_18270, found in Halothermothrix orenii (strain H 168 / OCM 544 / DSM 9562).